Reading from the N-terminus, the 94-residue chain is Small ribosomal subunit protein uS19 (94 aa).

Belongs to the universal ribosomal protein uS19 family.

Functionally, protein S19 forms a complex with S13 that binds strongly to the 16S ribosomal RNA. This Finegoldia magna (strain ATCC 29328 / DSM 20472 / WAL 2508) (Peptostreptococcus magnus) protein is Small ribosomal subunit protein uS19.